A 373-amino-acid chain; its full sequence is Cobalt-precorrin-5B C(1)-methyltransferase (373 aa).

The protein belongs to the CbiD family.

It catalyses the reaction Co-precorrin-5B + S-adenosyl-L-methionine = Co-precorrin-6A + S-adenosyl-L-homocysteine. It participates in cofactor biosynthesis; adenosylcobalamin biosynthesis; cob(II)yrinate a,c-diamide from sirohydrochlorin (anaerobic route): step 6/10. In terms of biological role, catalyzes the methylation of C-1 in cobalt-precorrin-5B to form cobalt-precorrin-6A. This chain is Cobalt-precorrin-5B C(1)-methyltransferase, found in Listeria monocytogenes serovar 1/2a (strain ATCC BAA-679 / EGD-e).